A 216-amino-acid chain; its full sequence is uncharacterized protein (216 aa).

The next 6 helical transmembrane spans lie at Y12–A32, G48–L68, L74–L94, I134–L154, F156–F176, and L191–A211.

The protein belongs to the Rht family.

It localises to the cell membrane. This is an uncharacterized protein from Pseudomonas aeruginosa (strain ATCC 15692 / DSM 22644 / CIP 104116 / JCM 14847 / LMG 12228 / 1C / PRS 101 / PAO1).